Reading from the N-terminus, the 267-residue chain is MGRGKVQLKRIENKINRQVTFSKRRNGLLKKAHEISVLCDAEVAAIVFSPKGKLYEYATDSRMDKILERYERYSYAEKALISAESESEGNWCHEYRKLKAKIETIQKCHKHLMGEDLESLNLKELQQLEQQLESSLKHIISRKSHLMLESISELQKKERSLQEENKALQKELVERQKNVRGQQQVGQWDQTQVQAQAQAQPQAQTSSSSSSMLRDQQALLPPQNICYPPVMMGERNDAAAAAAVAAQGQVQLRIGGLPPWMLSHLNA.

Residues 1–61 form the MADS-box domain; the sequence is MGRGKVQLKR…GKLYEYATDS (61 aa). In terms of domain architecture, K-box spans 88–178; that stretch reads EGNWCHEYRK…QKELVERQKN (91 aa). Residues 179 to 215 form a disordered region; that stretch reads VRGQQQVGQWDQTQVQAQAQAQPQAQTSSSSSSMLRD. Residues 182–215 show a composition bias toward low complexity; it reads QQQVGQWDQTQVQAQAQAQPQAQTSSSSSSMLRD.

As to quaternary structure, may interact with the K-box of MADS1 and MADS6.

The protein resides in the nucleus. Functionally, probable transcription factor. This chain is MADS-box transcription factor 15 (MADS15), found in Oryza sativa subsp. japonica (Rice).